Here is a 312-residue protein sequence, read N- to C-terminus: Salivary protein SG34 (312 aa).

The signal sequence occupies residues 1–20 (MSPSKKILVLLLFPILLVSS). Residues 95 to 158 (NMEVQLLRES…QEEIEEQTKQ (64 aa)) adopt a coiled-coil conformation.

It belongs to the salivary protein SG34 family. As to expression, female salivary gland (at protein level). Low-level expression in ovary.

In terms of biological role, possible serine protease. Functionally, (Microbial infection) Modulates replication of duck Tembusu virus in salivary glands and virus release into the saliva, probably via the regulation of antimicrobial peptides expression in response to virus infection. Its function is as follows. (Microbial infection) Enhances replication of dengue virus type 2 in human keratinocytes, probably by suppressing the production of type I interferons and antimicrobial peptides in response to virus infection. This chain is Salivary protein SG34, found in Aedes aegypti (Yellowfever mosquito).